The following is a 543-amino-acid chain: Intermediate filament protein ifb-2 (543 aa).

The segment covering 1-10 has biased composition (polar residues); that stretch reads MSAVSYSMHR. A disordered region spans residues 1 to 27; sequence MSAVSYSMHRTTTTTSSSSHGGVSAGH. The tract at residues 1 to 42 is head; that stretch reads MSAVSYSMHRTTTTTSSSSHGGVSAGHAAEEFVASAEREKQE. In terms of domain architecture, IF rod spans 39 to 388; the sequence is EKQEMQQLNS…KLVESEEGRF (350 aa). Residues 43–74 are coil 1A; that stretch reads MQQLNSRLEVYISRVRQLEDRNKELVIELDTL. A linker 1 region spans residues 75–88; sequence RGSLGNDIGQIKFK. The coil 1B stretch occupies residues 89–223; that stretch reads FNDSLVKVRR…RIHSQEITEL (135 aa). Positions 224 to 240 are linker 12; that stretch reads RTLLAQAPADTREFFKN. The tract at residues 241 to 387 is coil 2; the sequence is ELALAIREIK…RKLVESEEGR (147 aa). A tail region spans residues 388–542; that stretch reads FTHVGQGVVV…SHIQTTVASS (155 aa). Residues 420–538 enclose the LTD domain; sequence TRSSFKRHAK…IEKASHIQTT (119 aa).

This sequence belongs to the intermediate filament family. As to expression, expression is restricted to a discrete circumferential subapical layer within the intestinal terminal web (known as the 'endotube'); this layer joins directly to the apical junction complexes that connect adjacent gut cells.

The protein resides in the cytoplasm. In terms of biological role, cytoplasmic intermediate filaments provide mechanical strength to cells. Not essential protein. Component of the terminal web (organelle-depleted, intermediate filament-rich layer of cytoplasm that underlies the apical microvilli of polarized epithelial cells) in embryonic through to adult gut cells. Correct localization of filaments requires let-413. The protein is Intermediate filament protein ifb-2 (ifb-2) of Caenorhabditis elegans.